Reading from the N-terminus, the 271-residue chain is Aquaporin-1 (271 aa).

Residues 1-11 are Cytoplasmic-facing; the sequence is MASEFKKKLFW. A helical membrane pass occupies residues 12-29; that stretch reads RAVVAEFLAMILFVFISI. Residues 30–48 are Extracellular-facing; the sequence is GSALGFNYPVRNNQTAGAA. N-linked (GlcNAc...) asparagine glycosylation occurs at Asn-42. Residues 49-67 form a helical membrane-spanning segment; it reads QDNVKVSLAFGLSIATLAQ. Topologically, residues 68 to 70 are cytoplasmic; sequence SVG. Residues 71–84 lie within the membrane without spanning it; that stretch reads HISGAHLNPAVTLG. The NPA 1 signature appears at 78-80; that stretch reads NPA. The Cytoplasmic segment spans residues 85 to 92; it reads LLLSCQIS. Residues 93–111 traverse the membrane as a helical segment; the sequence is ILRAVMYIIAQCVGAIVAT. The Extracellular segment spans residues 112-135; that stretch reads AILSGITSSLPDNSLGRNELAPGV. A helical membrane pass occupies residues 136-155; that stretch reads NSGQGLGIEIIGTLQLVLCV. Residues 156–165 are Cytoplasmic-facing; that stretch reads LATTDRRRRD. The chain crosses the membrane as a helical span at residues 166 to 183; the sequence is LGGSGPLAIGLSVALGHL. Residues 184–188 are Extracellular-facing; sequence LAIDY. The stretch at 189 to 201 is an intramembrane region; it reads TGCGINPARSFGS. The NPA 2 motif lies at 194–196; the sequence is NPA. Topologically, residues 202–208 are extracellular; sequence SVITHNF. Residues 209 to 226 traverse the membrane as a helical segment; the sequence is KDHWIFWVGPFIGGALAV. At 227-271 the chain is on the cytoplasmic side; the sequence is LIYDFILAPRSSDLTDRVKVWTSGQVEEYELDGDDINSRVEMKPK. Ser-249 is modified (phosphoserine). Tyr-255 is modified (phosphotyrosine). Ser-264 carries the post-translational modification Phosphoserine.

The protein belongs to the MIP/aquaporin (TC 1.A.8) family. As to quaternary structure, homotetramer; each monomer provides an independent water pore. Component of the ankyrin-1 complex in the erythrocyte, composed of ANK1, RHCE, RHAG, SLC4A1, EPB42, GYPA, GYPB and AQP1. Interacts with EPHB2; involved in endolymph production in the inner ear. Identified in a complex with STOM. Interacts (via the N-terminal) with ANK1 (via ANK 1-5 repeats). Interacts (via the C-terminal) with EPB42.

The protein resides in the cell membrane. It carries out the reaction H2O(in) = H2O(out). The enzyme catalyses nitric oxide(out) = nitric oxide(in). It catalyses the reaction CO2(out) = CO2(in). The catalysed reaction is glycerol(in) = glycerol(out). It carries out the reaction H2O2(out) = H2O2(in). The enzyme catalyses K(+)(in) = K(+)(out). It catalyses the reaction Na(+)(in) = Na(+)(out). Functionally, forms a water channel that facilitates the transport of water across cell membranes, playing a crucial role in water homeostasis in various tissues. Could also be permeable to small solutes including hydrogen peroxide, glycerol and gases such as amonnia (NH3), nitric oxide (NO) and carbon dioxide (CO2). Recruited to the ankyrin-1 complex, a multiprotein complex of the erythrocyte membrane, it could be part of a CO2 metabolon, linking facilitated diffusion of CO2 across the membrane, anion exchange of Cl(-)/HCO3(-) and interconversion of dissolved CO2 and carbonic acid in the cytosol. In vitro, it shows non-selective gated cation channel activity and may be permeable to cations like K(+) and Na(+) in vivo. The sequence is that of Aquaporin-1 from Canis lupus familiaris (Dog).